Here is a 291-residue protein sequence, read N- to C-terminus: Secreted effector protein PipB (291 aa).

2 consecutive Pentapeptide repeat domains span residues 154–193 (LNLRGVNLAHKDFQGEDLSKIDASNADFRETTLSNVNLVG) and 199–238 (ANLHAVNLMGSNMTKANLTHADLTCANMSGVNLTAAILFG).

The protein localises to the secreted. It is found in the host membrane. Its function is as follows. Effector proteins function to alter host cell physiology and promote bacterial survival in host tissues. Does not appear to be required for the formation or the maintenance of either Salmonella-containing vacuole (SCV) or the Salmonella-induced filaments (Sifs). Not required for intracellular replication in phagocytic cells. This is Secreted effector protein PipB (pipB) from Salmonella typhimurium (strain LT2 / SGSC1412 / ATCC 700720).